A 226-amino-acid chain; its full sequence is EEF1A lysine methyltransferase 3 (226 aa).

S-adenosyl-L-methionine contacts are provided by residues Trp-57, 83–85 (GAG), Asp-104, Trp-133, and Ala-150.

Belongs to the methyltransferase superfamily. METTL21 family. In terms of assembly, interacts with members of the heat shock protein 70 and 90 families and of the TCP-1 chaperonin family, as well as with HSPD1, STIP1 and tubulin; at least some of these proteins may be methylation substrates.

It is found in the cytoplasm. It localises to the cytoskeleton. The protein localises to the microtubule organizing center. Its subcellular location is the centrosome. It carries out the reaction L-lysyl-[protein] + 3 S-adenosyl-L-methionine = N(6),N(6),N(6)-trimethyl-L-lysyl-[protein] + 3 S-adenosyl-L-homocysteine + 3 H(+). It catalyses the reaction L-lysyl-[protein] + S-adenosyl-L-methionine = N(6)-methyl-L-lysyl-[protein] + S-adenosyl-L-homocysteine + H(+). The catalysed reaction is N(6)-methyl-L-lysyl-[protein] + S-adenosyl-L-methionine = N(6),N(6)-dimethyl-L-lysyl-[protein] + S-adenosyl-L-homocysteine + H(+). The enzyme catalyses N(6),N(6)-dimethyl-L-lysyl-[protein] + S-adenosyl-L-methionine = N(6),N(6),N(6)-trimethyl-L-lysyl-[protein] + S-adenosyl-L-homocysteine + H(+). Its function is as follows. Protein-lysine methyltransferase that selectively mono-, di- and trimethylates 'Lys-165' of the translation elongation factors EEF1A1 and EEF1A2 in an aminoacyl-tRNA and GTP-dependent manner. EEF1A1 methylation by EEF1AKMT3 is dynamic as well as inducible by stress conditions, such as ER-stress, and plays a regulatory role on mRNA translation. The polypeptide is EEF1A lysine methyltransferase 3 (Homo sapiens (Human)).